A 451-amino-acid chain; its full sequence is Amino-acid acetyltransferase (451 aa).

The region spanning 305 to 451 (EYLREATLDD…RRSMVLMKKL (147 aa)) is the N-acetyltransferase domain.

This sequence belongs to the acetyltransferase family. ArgA subfamily.

It localises to the cytoplasm. It catalyses the reaction L-glutamate + acetyl-CoA = N-acetyl-L-glutamate + CoA + H(+). It participates in amino-acid biosynthesis; L-arginine biosynthesis; N(2)-acetyl-L-ornithine from L-glutamate: step 1/4. The protein is Amino-acid acetyltransferase (argA) of Ralstonia nicotianae (strain ATCC BAA-1114 / GMI1000) (Ralstonia solanacearum).